We begin with the raw amino-acid sequence, 253 residues long: Imidazole glycerol phosphate synthase subunit HisF (253 aa).

Residues D11 and D130 contribute to the active site.

The protein belongs to the HisA/HisF family. As to quaternary structure, heterodimer of HisH and HisF.

Its subcellular location is the cytoplasm. It catalyses the reaction 5-[(5-phospho-1-deoxy-D-ribulos-1-ylimino)methylamino]-1-(5-phospho-beta-D-ribosyl)imidazole-4-carboxamide + L-glutamine = D-erythro-1-(imidazol-4-yl)glycerol 3-phosphate + 5-amino-1-(5-phospho-beta-D-ribosyl)imidazole-4-carboxamide + L-glutamate + H(+). The protein operates within amino-acid biosynthesis; L-histidine biosynthesis; L-histidine from 5-phospho-alpha-D-ribose 1-diphosphate: step 5/9. IGPS catalyzes the conversion of PRFAR and glutamine to IGP, AICAR and glutamate. The HisF subunit catalyzes the cyclization activity that produces IGP and AICAR from PRFAR using the ammonia provided by the HisH subunit. This chain is Imidazole glycerol phosphate synthase subunit HisF, found in Ruegeria pomeroyi (strain ATCC 700808 / DSM 15171 / DSS-3) (Silicibacter pomeroyi).